The primary structure comprises 666 residues: Threonine--tRNA ligase (666 aa).

Positions 1–64 (MSDTVSLTFP…VDGKIEIVTR (64 aa)) constitute a TGS domain. The segment at 245 to 553 (DHRKLGREMD…LIENFAGHMP (309 aa)) is catalytic. 3 residues coordinate Zn(2+): C347, H398, and H530.

It belongs to the class-II aminoacyl-tRNA synthetase family. In terms of assembly, homodimer. Zn(2+) is required as a cofactor.

The protein resides in the cytoplasm. It carries out the reaction tRNA(Thr) + L-threonine + ATP = L-threonyl-tRNA(Thr) + AMP + diphosphate + H(+). Catalyzes the attachment of threonine to tRNA(Thr) in a two-step reaction: L-threonine is first activated by ATP to form Thr-AMP and then transferred to the acceptor end of tRNA(Thr). Also edits incorrectly charged L-seryl-tRNA(Thr). In Allorhizobium ampelinum (strain ATCC BAA-846 / DSM 112012 / S4) (Agrobacterium vitis (strain S4)), this protein is Threonine--tRNA ligase.